The chain runs to 503 residues: Probable cytosol aminopeptidase (503 aa).

2 residues coordinate Mn(2+): Lys-270 and Asp-275. Lys-282 is a catalytic residue. The Mn(2+) site is built by Asp-293, Asp-352, and Glu-354. Residue Arg-356 is part of the active site.

This sequence belongs to the peptidase M17 family. Mn(2+) serves as cofactor.

Its subcellular location is the cytoplasm. It catalyses the reaction Release of an N-terminal amino acid, Xaa-|-Yaa-, in which Xaa is preferably Leu, but may be other amino acids including Pro although not Arg or Lys, and Yaa may be Pro. Amino acid amides and methyl esters are also readily hydrolyzed, but rates on arylamides are exceedingly low.. The catalysed reaction is Release of an N-terminal amino acid, preferentially leucine, but not glutamic or aspartic acids.. Functionally, presumably involved in the processing and regular turnover of intracellular proteins. Catalyzes the removal of unsubstituted N-terminal amino acids from various peptides. The sequence is that of Probable cytosol aminopeptidase from Erwinia tasmaniensis (strain DSM 17950 / CFBP 7177 / CIP 109463 / NCPPB 4357 / Et1/99).